A 282-amino-acid polypeptide reads, in one-letter code: Pseudokinase OPG198 (282 aa).

2 residues coordinate ATP: Met-1 and Lys-30. In terms of domain architecture, Protein kinase spans 1–282 (MESFKYCFDN…DRLRRLFIQD (282 aa)).

The protein belongs to the protein kinase superfamily. Ser/Thr protein kinase family. Poxviruses subfamily. In terms of assembly, interacts with B1/VPK1. Interacts with host VRK1. Interacts with host VRK2.

The protein localises to the host nucleus. With respect to regulation, both catalytically active kinases B1/VPK1 and host VRK2 repress B12 inhibitory activity in a B1/VPK1 deletion mutant strain. In terms of biological role, pseudokinase that plays a role in viral DNA replication repression by activating the antiviral protein BANF1 and inhibiting the activity of host VRK1, a cellular modulator of BANF1. In Cynomys gunnisoni (Gunnison's prairie dog), this protein is Pseudokinase OPG198 (OPG198).